The chain runs to 371 residues: DNA repair protein RAD14 (371 aa).

The segment at 26–48 is disordered; that stretch reads LSSDQLNRIESRNEPLKTRPLAV. The segment covering 32 to 42 has biased composition (basic and acidic residues); the sequence is NRIESRNEPLK. Positions 191, 194, 213, and 216 each coordinate Zn(2+). Residues 191-216 fold into a zinc finger; that stretch reads CIECHINIEMDPVLHDVFKLQVCKQC.

Belongs to the XPA family. Two monomers bind to kinked/damaged DNA (construct with only the C-terminal DNA-binding domain). Component of the nucleotide excision repair factor 1 (NEF1) complex consisting of RAD1, RAD10 and RAD14.

The protein localises to the nucleus. Its function is as follows. Involved in nucleotide excision repair. Binds specifically to damaged DNA. Required for the incision step. The polypeptide is DNA repair protein RAD14 (RAD14) (Saccharomyces cerevisiae (strain ATCC 204508 / S288c) (Baker's yeast)).